Reading from the N-terminus, the 372-residue chain is 4-hydroxy-3-methylbut-2-en-1-yl diphosphate synthase (flavodoxin) (372 aa).

Residues Cys-270, Cys-273, Cys-305, and Glu-312 each contribute to the [4Fe-4S] cluster site.

This sequence belongs to the IspG family. It depends on [4Fe-4S] cluster as a cofactor.

The enzyme catalyses (2E)-4-hydroxy-3-methylbut-2-enyl diphosphate + oxidized [flavodoxin] + H2O + 2 H(+) = 2-C-methyl-D-erythritol 2,4-cyclic diphosphate + reduced [flavodoxin]. It participates in isoprenoid biosynthesis; isopentenyl diphosphate biosynthesis via DXP pathway; isopentenyl diphosphate from 1-deoxy-D-xylulose 5-phosphate: step 5/6. Converts 2C-methyl-D-erythritol 2,4-cyclodiphosphate (ME-2,4cPP) into 1-hydroxy-2-methyl-2-(E)-butenyl 4-diphosphate. The polypeptide is 4-hydroxy-3-methylbut-2-en-1-yl diphosphate synthase (flavodoxin) (Salmonella paratyphi B (strain ATCC BAA-1250 / SPB7)).